A 223-amino-acid chain; its full sequence is Endonuclease NucS (223 aa).

Belongs to the NucS endonuclease family.

The protein resides in the cytoplasm. Its function is as follows. Cleaves both 3' and 5' ssDNA extremities of branched DNA structures. The protein is Endonuclease NucS of Mycobacterium sp. (strain JLS).